The chain runs to 348 residues: Large ribosomal subunit protein uL3m (348 aa).

A mitochondrion-targeting transit peptide spans 1–40 (MPGWRLLTQVGAQVLGRLGDGLGAALGPGNRTHIWLFVRG).

Belongs to the universal ribosomal protein uL3 family. As to quaternary structure, component of the mitochondrial large ribosomal subunit (mt-LSU). Mature mammalian 55S mitochondrial ribosomes consist of a small (28S) and a large (39S) subunit. The 28S small subunit contains a 12S ribosomal RNA (12S mt-rRNA) and 30 different proteins. The 39S large subunit contains a 16S rRNA (16S mt-rRNA), a copy of mitochondrial valine transfer RNA (mt-tRNA(Val)), which plays an integral structural role, and 52 different proteins.

The protein resides in the mitochondrion. This Homo sapiens (Human) protein is Large ribosomal subunit protein uL3m (MRPL3).